The primary structure comprises 146 residues: Protein STIG1 (146 aa).

The N-terminal stretch at 1 to 23 (MAFINLLILIILTLSSTPITTMS) is a signal peptide. N-linked (GlcNAc...) asparagine glycosylation is found at Asn-31, Asn-61, and Asn-84.

This sequence belongs to the STIG1 family. In terms of processing, glycosylated. As to expression, expressed exclusively in the stigmatic secretory zone.

The protein resides in the secreted. Functionally, involved in the temporal regulation of the exudate secretion onto the stigma. The protein is Protein STIG1 of Nicotiana tabacum (Common tobacco).